Consider the following 63-residue polypeptide: Beta-defensin 6 (63 aa).

Positions 1-22 (MKIHYLLFAFILVMLSPLAAFS) are cleaved as a signal peptide. Gln23 carries the pyrrolidone carboxylic acid modification. 3 cysteine pairs are disulfide-bonded: Cys31/Cys59, Cys38/Cys52, and Cys42/Cys60.

This sequence belongs to the beta-defensin family. As to expression, predominantly expressed in skeletal muscle, also expressed in esophagus, tongue, and trachea. Also expressed in lung when induced by lipopolysaccharide.

The protein resides in the secreted. In terms of biological role, has potent antibacterial activity against E.coli (ATCC 25922). This chain is Beta-defensin 6 (Defb6), found in Mus musculus (Mouse).